We begin with the raw amino-acid sequence, 79 residues long: D-alanyl carrier protein (79 aa).

A Carrier domain is found at 1–77 (MDVKAEVIEI…KIVEGVTELR (77 aa)). Serine 35 is modified (O-(pantetheine 4'-phosphoryl)serine).

The protein belongs to the DltC family. 4'-phosphopantetheine is transferred from CoA to a specific serine of apo-DCP.

It localises to the cytoplasm. It participates in cell wall biogenesis; lipoteichoic acid biosynthesis. Functionally, carrier protein involved in the D-alanylation of lipoteichoic acid (LTA). The loading of thioester-linked D-alanine onto DltC is catalyzed by D-alanine--D-alanyl carrier protein ligase DltA. The DltC-carried D-alanyl group is further transferred to cell membrane phosphatidylglycerol (PG) by forming an ester bond, probably catalyzed by DltD. D-alanylation of LTA plays an important role in modulating the properties of the cell wall in Gram-positive bacteria, influencing the net charge of the cell wall. The protein is D-alanyl carrier protein of Streptococcus gordonii (strain Challis / ATCC 35105 / BCRC 15272 / CH1 / DL1 / V288).